Here is a 366-residue protein sequence, read N- to C-terminus: Chorismate synthase (366 aa).

NADP(+)-binding residues include Arg-48 and Arg-54. FMN contacts are provided by residues 125–127, 238–239, Gly-278, 293–297, and Arg-319; these read RSS, NA, and KPTSS.

Belongs to the chorismate synthase family. Homotetramer. The cofactor is FMNH2.

The enzyme catalyses 5-O-(1-carboxyvinyl)-3-phosphoshikimate = chorismate + phosphate. The protein operates within metabolic intermediate biosynthesis; chorismate biosynthesis; chorismate from D-erythrose 4-phosphate and phosphoenolpyruvate: step 7/7. In terms of biological role, catalyzes the anti-1,4-elimination of the C-3 phosphate and the C-6 proR hydrogen from 5-enolpyruvylshikimate-3-phosphate (EPSP) to yield chorismate, which is the branch point compound that serves as the starting substrate for the three terminal pathways of aromatic amino acid biosynthesis. This reaction introduces a second double bond into the aromatic ring system. The polypeptide is Chorismate synthase (Ralstonia nicotianae (strain ATCC BAA-1114 / GMI1000) (Ralstonia solanacearum)).